Reading from the N-terminus, the 1002-residue chain is Vacuolar protein sorting-associated protein 18 homolog (1002 aa).

Phosphoserine is present on Ser-344. A CHCR repeat occupies 650–804; the sequence is LMAQGSRLEV…DIKGTNDVKK (155 aa). Residues 827–880 adopt a coiled-coil conformation; sequence FEKIDNFKEAICDALRDYNQRIQELQREMAETTEQTDRVTAELQQLRQHSLTVE. The segment at 885–924 adopts an RING-type; degenerate zinc-finger fold; that stretch reads CEICEMMLLVKPFFIFICGHKFHSDCLEKHVVPLLTKEQC.

Belongs to the VPS18 family. As to quaternary structure, component of the class C core vacuole/endosome tethering (CORVET) complex composed of at least Vps8, dor/Vps18, car/Vps33A and Vps16A; unlike in other species, Vps11 is not part of the Drosophila complex. Due to the reduced number of components the Drosophila CORVET complex is often referred to as the miniCORVET complex. Interacts with car/Vps33A. Interacts with ema. Component of the homotypic fusion and vacuole protein sorting (HOPS) complex, composed of Vps16A, car/Vps33A, dor/Vps18, Vps39, Vps11 and lt/Vps41. The tethering complex core made up of Vps16A, car/Vps33A and dor/Vps18 and shared by both HOPS and CORVET, preferentially associates with CORVET-specific Vps8 over HOPS-specific lt/Vps41. Interacts with Syx17 (via SNARE domain); the interaction may involve multiple components of the HOPS complex and may promote assembly of the Syx17-Snap29-Vamp7 trans-SNARE complex.

Its subcellular location is the early endosome. It localises to the late endosome membrane. The protein resides in the lysosome membrane. It is found in the cytoplasmic vesicle. The protein localises to the autophagosome. Functionally, core component of the class C core vacuole/endosome tethering (CORVET) and the homotypic fusion and vacuole protein sorting (HOPS) tethering complexes involved in endo-lysosomal vesicle trafficking and lysosome biogenesis. The CORVET complex facilitates docking and fusion of endosomal vesicles during endosome maturation, acts upstream of HOPS, but is not involved in autophagic flux. The CORVET complex may cooperate with the early endosomal tether Rbsn-5 to mediate endosomal fusion. The HOPS complex facilitates docking and fusion of lysosomes with late endosomes and several other types of vesicles. The HOPS complex is also involved in autophagy and crinophagy (the elimination of unused secretory granules through their fusion with lysosomes). The HOPS complex mediates autophagocitic flux, probably by binding autophagosome-associated Syx17/syntaxin 17, promoting assembly of the trans-SNARE complex and instigating autophagosome-lysosome fusion. Independent of Syx17/syntaxin 17, HOPS is involved in biosynthetic transport to lysosomes and lysosome-related organelles such as eye-pigment granules. Required for endocytic degradation of boss/bride of sevenless and N/Notch in developing ommatidia. Required for autophagocytosis-dependent remodeling of myofibrils and transverse-tubules (T-tubules) during metamorphosis. In larval neuromuscular junctions, essential for endosomal sorting that traffics old or dysfunctional synaptic vesicle proteins through a degradative endolysosomal route. Required to maintain normal levels of rush, which functions in endosome formation and trafficking. The polypeptide is Vacuolar protein sorting-associated protein 18 homolog (Drosophila melanogaster (Fruit fly)).